A 496-amino-acid polypeptide reads, in one-letter code: Probable chlorophyll(ide) b reductase NYC1, chloroplastic (496 aa).

A chloroplast-targeting transit peptide spans Met-1–Arg-43. A run of 2 helical transmembrane segments spans residues Tyr-105–Gly-125 and Leu-132–Val-152. Ile-166–Val-190 provides a ligand contact to NAD(+). Positions Ser-195–Leu-224 form a coiled coil. Tyr-330 serves as the catalytic Proton acceptor. Residues Trp-470–Pro-490 traverse the membrane as a helical segment.

Belongs to the short-chain dehydrogenases/reductases (SDR) family. In terms of assembly, interacts with NOL to form a complex that acts as a chlorophyll b reductase. Interacts with HCAR, RCCR, SGR1 and the LHCII complex. Part of a SGR1-CCE-LHCII complex, which acts in chlorophyll breakdown.

Its subcellular location is the plastid. The protein localises to the chloroplast thylakoid membrane. The enzyme catalyses 7(1)-hydroxychlorophyllide a + NAD(+) = chlorophyllide b + NADH + H(+). The catalysed reaction is 7(1)-hydroxychlorophyllide a + NADP(+) = chlorophyllide b + NADPH + H(+). Involved in chlorophyll b degradation. Belongs to the chlorophyll catabolic enzymes (CCEs). The protein is Probable chlorophyll(ide) b reductase NYC1, chloroplastic (NYC1) of Arabidopsis thaliana (Mouse-ear cress).